The following is a 133-amino-acid chain: uncharacterized protein (133 aa).

The chain crosses the membrane as a helical span at residues 36–56 (LPMLIALACIFLLLATCLLFM). Residues 105–133 (HGRPTVPRQPLPGPEDNRSHCDYMESTKM) are disordered. Residues 119–133 (EDNRSHCDYMESTKM) show a composition bias toward basic and acidic residues.

Its subcellular location is the membrane. This is an uncharacterized protein from Homo sapiens (Human).